The following is a 169-amino-acid chain: Peptide deformylase (169 aa).

Fe cation contacts are provided by C91 and H133. E134 is an active-site residue. Position 137 (H137) interacts with Fe cation.

The protein belongs to the polypeptide deformylase family. Requires Fe(2+) as cofactor.

It carries out the reaction N-terminal N-formyl-L-methionyl-[peptide] + H2O = N-terminal L-methionyl-[peptide] + formate. Its function is as follows. Removes the formyl group from the N-terminal Met of newly synthesized proteins. Requires at least a dipeptide for an efficient rate of reaction. N-terminal L-methionine is a prerequisite for activity but the enzyme has broad specificity at other positions. The polypeptide is Peptide deformylase (Aliivibrio salmonicida (strain LFI1238) (Vibrio salmonicida (strain LFI1238))).